A 263-amino-acid chain; its full sequence is Protein IQ-DOMAIN 9 (263 aa).

Residues 16 to 41 (SKQGTEKKKTSAVKPKKGSKKKGTSL) form a disordered region. A Nuclear localization signal 1 motif is present at residues 21-28 (EKKKTSAV). Residues 25-38 (TSAVKPKKGSKKKG) are compositionally biased toward basic residues. The IQ domain occupies 46-75 (EDWAATRIQTAFKAYKARKSLRRLKGIARA). The calmodulin-binding stretch occupies residues 59 to 78 (AYKARKSLRRLKGIARAKLS). The Nuclear localization signal 2 motif lies at 107–114 (ARRVCMVT). A disordered region spans residues 216–263 (TPKKPKSSKTDSNSPAKRTVSLSSVPAKTPFPGARNTVKPRRLSFPGA). A compositionally biased stretch (polar residues) spans 226-241 (DSNSPAKRTVSLSSVP).

The protein belongs to the IQD family. As to quaternary structure, binds to multiple calmodulin (CaM) in the presence of Ca(2+) and CaM-like proteins.

The protein localises to the nucleus. The protein resides in the nuclear body. Its function is as follows. May be involved in cooperative interactions with calmodulins or calmodulin-like proteins. Recruits calmodulin proteins to microtubules, thus being a potential scaffold in cellular signaling and trafficking. May associate with nucleic acids and regulate gene expression at the transcriptional or post-transcriptional level. The polypeptide is Protein IQ-DOMAIN 9 (Arabidopsis thaliana (Mouse-ear cress)).